A 931-amino-acid chain; its full sequence is Dipeptidyl aminopeptidase A (931 aa).

A compositionally biased stretch (basic residues) spans 1–13; that stretch reads MSASTHSHKRKNS. The tract at residues 1-58 is disordered; that stretch reads MSASTHSHKRKNSHLFPQRKSSNSSMDKPFFPNNDSVANTDPQSNENGHTINEIRPTE. The Cytoplasmic segment spans residues 1–119; the sequence is MSASTHSHKR…GEWSLPEKRS (119 aa). Over residues 33–50 the composition is skewed to polar residues; sequence NNDSVANTDPQSNENGHT. A helical; Signal-anchor for type II membrane protein membrane pass occupies residues 120-140; that stretch reads YVLVFTLIALSVLVLLVILIP. Residues 141-931 lie on the Lumenal side of the membrane; that stretch reads SKLLPTKITR…RFDNTEVLHL (791 aa). N-linked (GlcNAc...) asparagine glycosylation is present at N377. S785 acts as the Charge relay system in catalysis. N814 is a glycosylation site (N-linked (GlcNAc...) asparagine). Catalysis depends on charge relay system residues D863 and H896.

It belongs to the peptidase S9B family.

Its subcellular location is the vacuole membrane. Its function is as follows. Responsible for the proteolytic maturation of the alpha-factor precursor. This Saccharomyces cerevisiae (strain ATCC 204508 / S288c) (Baker's yeast) protein is Dipeptidyl aminopeptidase A (STE13).